Consider the following 607-residue polypeptide: Elongation factor 4 (607 aa).

A tr-type G domain is found at 11–193 (KKIRNFSIIA…QIVELVPPPT (183 aa)). Residues 23–28 (DHGKST) and 140–143 (NKID) each bind GTP.

Belongs to the TRAFAC class translation factor GTPase superfamily. Classic translation factor GTPase family. LepA subfamily.

It is found in the cell membrane. It carries out the reaction GTP + H2O = GDP + phosphate + H(+). Its function is as follows. Required for accurate and efficient protein synthesis under certain stress conditions. May act as a fidelity factor of the translation reaction, by catalyzing a one-codon backward translocation of tRNAs on improperly translocated ribosomes. Back-translocation proceeds from a post-translocation (POST) complex to a pre-translocation (PRE) complex, thus giving elongation factor G a second chance to translocate the tRNAs correctly. Binds to ribosomes in a GTP-dependent manner. In Exiguobacterium sp. (strain ATCC BAA-1283 / AT1b), this protein is Elongation factor 4.